A 67-amino-acid chain; its full sequence is Large ribosomal subunit protein bL31 (67 aa).

The Zn(2+) site is built by C16, C18, C36, and C39.

Belongs to the bacterial ribosomal protein bL31 family. Type A subfamily. As to quaternary structure, part of the 50S ribosomal subunit. Requires Zn(2+) as cofactor.

Its function is as follows. Binds the 23S rRNA. In Desulforudis audaxviator (strain MP104C), this protein is Large ribosomal subunit protein bL31.